The primary structure comprises 160 residues: Large ribosomal subunit protein uL30m (160 aa).

Residues 1–34 constitute a mitochondrion transit peptide; it reads MAGVLRSVFQRPPGRLQTVKKGAESLIGTEWIRH. The disordered stretch occupies residues 45-64; sequence VFQPRPEDHEKYGGDPQNPH.

The protein belongs to the universal ribosomal protein uL30 family. Component of the mitochondrial ribosome large subunit (39S) which comprises a 16S rRNA and about 50 distinct proteins.

Its subcellular location is the mitochondrion. The polypeptide is Large ribosomal subunit protein uL30m (Mrpl30) (Rattus norvegicus (Rat)).